Reading from the N-terminus, the 714-residue chain is Elongation factor G-like protein (714 aa).

Residues 21–289 enclose the tr-type G domain; sequence GGVRNVVLVG…VATRGFPSPM (269 aa). The segment at 30-37 is G1; the sequence is GPSGGGKT. 30-37 lines the GTP pocket; that stretch reads GPSGGGKT. The tract at residues 73–77 is G2; that stretch reads QRSVG. The segment at 94-97 is G3; sequence DTPG. Residues 94–98 and 148–151 each bind GTP; these read DTPGY and TKLD. Residues 148–151 are G4; sequence TKLD. The segment at 267 to 269 is G5; the sequence is CSS.

The protein belongs to the TRAFAC class translation factor GTPase superfamily. Classic translation factor GTPase family. EF-G/EF-2 subfamily.

This is Elongation factor G-like protein from Mycobacterium tuberculosis (strain CDC 1551 / Oshkosh).